The following is a 384-amino-acid chain: Putative D-galactosamine-6-phosphate deaminase AgaS (384 aa).

2 SIS domains span residues 45–197 (LEPL…SQTF) and 215–364 (SEGV…PDTP).

Belongs to the SIS family. AgaS subfamily.

It catalyses the reaction D-galactosamine 6-phosphate + H2O = D-tagatopyranose 1-phosphate + NH4(+). In terms of biological role, catalyzes the isomerization-deamination of galactosamine 6-phosphate to form tagatofuranose 6-phosphate and ammonium ion. The chain is Putative D-galactosamine-6-phosphate deaminase AgaS (agaS) from Escherichia coli (strain K12).